Reading from the N-terminus, the 303-residue chain is Probable 5-dehydro-4-deoxyglucarate dehydratase (303 aa).

It belongs to the DapA family.

It catalyses the reaction 5-dehydro-4-deoxy-D-glucarate + H(+) = 2,5-dioxopentanoate + CO2 + H2O. Its pathway is carbohydrate acid metabolism; D-glucarate degradation; 2,5-dioxopentanoate from D-glucarate: step 2/2. This chain is Probable 5-dehydro-4-deoxyglucarate dehydratase, found in Acinetobacter baumannii (strain ATCC 17978 / DSM 105126 / CIP 53.77 / LMG 1025 / NCDC KC755 / 5377).